The primary structure comprises 52 residues: uncharacterized protein (52 aa).

A helical membrane pass occupies residues Met-7–Phe-27.

Its subcellular location is the membrane. This is an uncharacterized protein from Bacillus subtilis (strain 168).